The sequence spans 103 residues: Enhancer of rudimentary homolog (103 aa).

Belongs to the E(R) family. As to quaternary structure, homodimer.

Its function is as follows. May have a role in the cell cycle. This is Enhancer of rudimentary homolog from Aedes aegypti (Yellowfever mosquito).